The chain runs to 70 residues: ATP synthase subunit c (70 aa).

Helical transmembrane passes span Ile4 to Ile24 and Phe47 to Val67.

This sequence belongs to the ATPase C chain family. As to quaternary structure, F-type ATPases have 2 components, F(1) - the catalytic core - and F(0) - the membrane proton channel. F(1) has five subunits: alpha(3), beta(3), gamma(1), delta(1), epsilon(1). F(0) has three main subunits: a(1), b(2) and c(10-14). The alpha and beta chains form an alternating ring which encloses part of the gamma chain. F(1) is attached to F(0) by a central stalk formed by the gamma and epsilon chains, while a peripheral stalk is formed by the delta and b chains.

It localises to the cell membrane. Functionally, f(1)F(0) ATP synthase produces ATP from ADP in the presence of a proton or sodium gradient. F-type ATPases consist of two structural domains, F(1) containing the extramembraneous catalytic core and F(0) containing the membrane proton channel, linked together by a central stalk and a peripheral stalk. During catalysis, ATP synthesis in the catalytic domain of F(1) is coupled via a rotary mechanism of the central stalk subunits to proton translocation. Its function is as follows. Key component of the F(0) channel; it plays a direct role in translocation across the membrane. A homomeric c-ring of between 10-14 subunits forms the central stalk rotor element with the F(1) delta and epsilon subunits. The sequence is that of ATP synthase subunit c from Staphylococcus carnosus (strain TM300).